Consider the following 286-residue polypeptide: Meiotically up-regulated gene 64 protein (286 aa).

The protein localises to the cytoplasm. In terms of biological role, has a role in meiosis. The polypeptide is Meiotically up-regulated gene 64 protein (mug64) (Schizosaccharomyces pombe (strain 972 / ATCC 24843) (Fission yeast)).